The primary structure comprises 536 residues: CTP synthase (536 aa).

Residues 1-266 (MKTKFIFVTG…DEQVVEKLNI (266 aa)) are amidoligase domain. Serine 14 lines the CTP pocket. Serine 14 serves as a coordination point for UTP. ATP is bound by residues 15–20 (SIGKGL) and aspartate 72. Aspartate 72 and glutamate 140 together coordinate Mg(2+). Residues 147–149 (DIE), 187–192 (KTKPTQ), and lysine 223 contribute to the CTP site. UTP-binding positions include 187–192 (KTKPTQ) and lysine 223. A Glutamine amidotransferase type-1 domain is found at 292–534 (RIAIVGKYVN…IAAALDRKDK (243 aa)). Residue glycine 354 coordinates L-glutamine. Cysteine 381 serves as the catalytic Nucleophile; for glutamine hydrolysis. L-glutamine is bound by residues 382–385 (LGMQ), glutamate 405, and arginine 462. Residues histidine 507 and glutamate 509 contribute to the active site.

The protein belongs to the CTP synthase family. In terms of assembly, homotetramer.

The enzyme catalyses UTP + L-glutamine + ATP + H2O = CTP + L-glutamate + ADP + phosphate + 2 H(+). The catalysed reaction is L-glutamine + H2O = L-glutamate + NH4(+). It catalyses the reaction UTP + NH4(+) + ATP = CTP + ADP + phosphate + 2 H(+). It functions in the pathway pyrimidine metabolism; CTP biosynthesis via de novo pathway; CTP from UDP: step 2/2. Allosterically activated by GTP, when glutamine is the substrate; GTP has no effect on the reaction when ammonia is the substrate. The allosteric effector GTP functions by stabilizing the protein conformation that binds the tetrahedral intermediate(s) formed during glutamine hydrolysis. Inhibited by the product CTP, via allosteric rather than competitive inhibition. Its function is as follows. Catalyzes the ATP-dependent amination of UTP to CTP with either L-glutamine or ammonia as the source of nitrogen. Regulates intracellular CTP levels through interactions with the four ribonucleotide triphosphates. This is CTP synthase from Geobacter sulfurreducens (strain ATCC 51573 / DSM 12127 / PCA).